Consider the following 128-residue polypeptide: Glycine cleavage system H protein (128 aa).

Residues 25 to 107 (TITVGITHHA…YGAGWFFKLK (83 aa)) form the Lipoyl-binding domain. Lysine 66 is subject to N6-lipoyllysine.

Belongs to the GcvH family. The glycine cleavage system is composed of four proteins: P, T, L and H. The cofactor is (R)-lipoate.

In terms of biological role, the glycine cleavage system catalyzes the degradation of glycine. The H protein shuttles the methylamine group of glycine from the P protein to the T protein. The protein is Glycine cleavage system H protein of Neisseria meningitidis serogroup B (strain ATCC BAA-335 / MC58).